We begin with the raw amino-acid sequence, 612 residues long: RNA-binding protein MRN1 (612 aa).

The segment covering 1–28 (MVVSYNNNNNNNNNNNNNNISNNNNNNN) has biased composition (low complexity). Disordered stretches follow at residues 1 to 57 (MVVS…TYAS) and 105 to 125 (PTQFQTKQRNDSQQQRFSQEQ). 2 stretches are compositionally biased toward polar residues: residues 42–57 (YQQSSSSGPYQETYAS) and 115–125 (DSQQQRFSQEQ). RRM domains follow at residues 201–274 (RTVY…WGKP), 292–379 (RNVY…KTQQ), 431–504 (RTVY…WGKH), and 522–602 (RNVY…FGKD).

The protein localises to the cytoplasm. In terms of biological role, RNA-binding protein that binds specific categories of mRNAs, including those that contain upstream open reading frames (uORFs) and internal ribosome entry sites (IRES). Probably involved in translational regulation. The sequence is that of RNA-binding protein MRN1 (MRN1) from Saccharomyces cerevisiae (strain ATCC 204508 / S288c) (Baker's yeast).